Consider the following 559-residue polypeptide: NXPE family member 3 (559 aa).

Residues 1–30 (MWTNFFKLRLFCCLLAVLMVVVLVINVTQV) form the signal peptide. 3 N-linked (GlcNAc...) asparagine glycosylation sites follow: N237, N292, and N346.

This sequence belongs to the NXPE family.

The protein localises to the secreted. This Homo sapiens (Human) protein is NXPE family member 3 (NXPE3).